The primary structure comprises 247 residues: GTP cyclohydrolase 1 type 2 homolog (247 aa).

A divalent metal cation-binding residues include His-63, His-64, Asp-101, His-215, and Glu-219.

The protein belongs to the GTP cyclohydrolase I type 2/NIF3 family. In terms of assembly, homohexamer.

The protein is GTP cyclohydrolase 1 type 2 homolog of Buchnera aphidicola subsp. Acyrthosiphon pisum (strain APS) (Acyrthosiphon pisum symbiotic bacterium).